A 430-amino-acid chain; its full sequence is UDP-N-acetylglucosamine 1-carboxyvinyltransferase (430 aa).

Residue 22–23 (KN) coordinates phosphoenolpyruvate. Arginine 102 serves as a coordination point for UDP-N-acetyl-alpha-D-glucosamine. The active-site Proton donor is cysteine 126. A 2-(S-cysteinyl)pyruvic acid O-phosphothioketal modification is found at cysteine 126. UDP-N-acetyl-alpha-D-glucosamine is bound by residues 131–135 (RPVDL), 172–175 (KVSV), aspartate 317, and isoleucine 339.

This sequence belongs to the EPSP synthase family. MurA subfamily.

The protein localises to the cytoplasm. It carries out the reaction phosphoenolpyruvate + UDP-N-acetyl-alpha-D-glucosamine = UDP-N-acetyl-3-O-(1-carboxyvinyl)-alpha-D-glucosamine + phosphate. It functions in the pathway cell wall biogenesis; peptidoglycan biosynthesis. Functionally, cell wall formation. Adds enolpyruvyl to UDP-N-acetylglucosamine. The chain is UDP-N-acetylglucosamine 1-carboxyvinyltransferase from Rhizobium etli (strain CIAT 652).